The primary structure comprises 221 residues: uncharacterized protein (221 aa).

This is an uncharacterized protein from Sinorhizobium fredii (strain NBRC 101917 / NGR234).